Consider the following 303-residue polypeptide: Protein REVEILLE 5 (303 aa).

The HTH myb-type domain occupies 54 to 108 (TIKKSRENWTDQEHDKFLEALHLFDRDWKKIEAFVGSKTVVQIRSHAQKYFLKVQ). Positions 81–104 (WKKIEAFVGSKTVVQIRSHAQKYF) form a DNA-binding region, H-T-H motif. The segment at 109-130 (KSGANEHLPPPRPKRKASHPYP) is disordered.

The protein localises to the nucleus. Its function is as follows. Probable transcription factor. The polypeptide is Protein REVEILLE 5 (RVE5) (Arabidopsis thaliana (Mouse-ear cress)).